The chain runs to 516 residues: Cytochrome P450 1A1 (516 aa).

The interval 33 to 44 is mitochondrial targeting signal; it reads WQPRVPKGLKSP. Serine 71 is a glycosylation site (O-linked (GlcNAc) serine). Phenylalanine 228 serves as a coordination point for substrate. Residue cysteine 461 coordinates heme.

This sequence belongs to the cytochrome P450 family. In terms of assembly, interacts with cytosolic chaperones HSP70 and HSP90; this interaction is required for initial targeting to mitochondria. Interacts (via mitochondrial targeting signal) with TOMM40 (via N-terminus); this interaction is required for translocation across the mitochondrial outer membrane. The cofactor is heme.

It localises to the endoplasmic reticulum membrane. The protein resides in the mitochondrion inner membrane. The protein localises to the microsome membrane. Its subcellular location is the cytoplasm. It carries out the reaction an organic molecule + reduced [NADPH--hemoprotein reductase] + O2 = an alcohol + oxidized [NADPH--hemoprotein reductase] + H2O + H(+). The catalysed reaction is estrone + reduced [NADPH--hemoprotein reductase] + O2 = 2-hydroxyestrone + oxidized [NADPH--hemoprotein reductase] + H2O + H(+). The enzyme catalyses estrone + reduced [NADPH--hemoprotein reductase] + O2 = 4-hydroxyestrone + oxidized [NADPH--hemoprotein reductase] + H2O + H(+). It catalyses the reaction estrone + reduced [NADPH--hemoprotein reductase] + O2 = 6alpha-hydroxyestrone + oxidized [NADPH--hemoprotein reductase] + H2O + H(+). It carries out the reaction estrone + reduced [NADPH--hemoprotein reductase] + O2 = 15alpha-hydroxyestrone + oxidized [NADPH--hemoprotein reductase] + H2O + H(+). The catalysed reaction is estrone + reduced [NADPH--hemoprotein reductase] + O2 = 16alpha-hydroxyestrone + oxidized [NADPH--hemoprotein reductase] + H2O + H(+). The enzyme catalyses 17beta-estradiol + reduced [NADPH--hemoprotein reductase] + O2 = 2-hydroxy-17beta-estradiol + oxidized [NADPH--hemoprotein reductase] + H2O + H(+). It catalyses the reaction 17beta-estradiol + reduced [NADPH--hemoprotein reductase] + O2 = 4-hydroxy-17beta-estradiol + oxidized [NADPH--hemoprotein reductase] + H2O + H(+). It carries out the reaction 17beta-estradiol + reduced [NADPH--hemoprotein reductase] + O2 = 6alpha-hydroxy-17beta-estradiol + oxidized [NADPH--hemoprotein reductase] + H2O + H(+). The catalysed reaction is 17beta-estradiol + reduced [NADPH--hemoprotein reductase] + O2 = 7alpha-hydroxy-17beta-estradiol + oxidized [NADPH--hemoprotein reductase] + H2O + H(+). The enzyme catalyses 17beta-estradiol + reduced [NADPH--hemoprotein reductase] + O2 = 15alpha-hydroxy-17beta-estradiol + oxidized [NADPH--hemoprotein reductase] + H2O + H(+). It catalyses the reaction (5Z,8Z,11Z)-eicosatrienoate + reduced [NADPH--hemoprotein reductase] + O2 = 19-hydroxy-(5Z,8Z,11Z)-eicosatrienoate + oxidized [NADPH--hemoprotein reductase] + H2O + H(+). It carries out the reaction (5Z,8Z,11Z,14Z)-eicosatetraenoate + reduced [NADPH--hemoprotein reductase] + O2 = 16-hydroxy-(5Z,8Z,11Z,14Z)-eicosatetraenoate + oxidized [NADPH--hemoprotein reductase] + H2O + H(+). The catalysed reaction is (5Z,8Z,11Z,14Z)-eicosatetraenoate + reduced [NADPH--hemoprotein reductase] + O2 = 17-hydroxy-(5Z,8Z,11Z,14Z)-eicosatetraenoate + oxidized [NADPH--hemoprotein reductase] + H2O + H(+). The enzyme catalyses (5Z,8Z,11Z,14Z)-eicosatetraenoate + reduced [NADPH--hemoprotein reductase] + O2 = 18-hydroxy-(5Z,8Z,11Z,14Z)-eicosatetraenoate + oxidized [NADPH--hemoprotein reductase] + H2O + H(+). It catalyses the reaction (5Z,8Z,11Z,14Z)-eicosatetraenoate + reduced [NADPH--hemoprotein reductase] + O2 = 19-hydroxy-(5Z,8Z,11Z,14Z)-eicosatetraenoate + oxidized [NADPH--hemoprotein reductase] + H2O + H(+). It carries out the reaction (5Z,8Z,11Z,14Z,17Z)-eicosapentaenoate + reduced [NADPH--hemoprotein reductase] + O2 = 19-hydroxy-(5Z,8Z,11Z,14Z,17Z)-eicosapentaenoate + oxidized [NADPH--hemoprotein reductase] + H2O + H(+). The catalysed reaction is (5Z,8Z,11Z,14Z)-eicosatetraenoate + reduced [NADPH--hemoprotein reductase] + O2 = (8R,9S)-epoxy-(5Z,11Z,14Z)-eicosatrienoate + oxidized [NADPH--hemoprotein reductase] + H2O + H(+). The enzyme catalyses (5Z,8Z,11Z,14Z)-eicosatetraenoate + reduced [NADPH--hemoprotein reductase] + O2 = (11R,12S)-epoxy-(5Z,8Z,14Z)-eicosatrienoate + oxidized [NADPH--hemoprotein reductase] + H2O + H(+). It catalyses the reaction (5Z,8Z,11Z,14Z)-eicosatetraenoate + reduced [NADPH--hemoprotein reductase] + O2 = (14S,15R)-epoxy-(5Z,8Z,11Z)-eicosatrienoate + oxidized [NADPH--hemoprotein reductase] + H2O + H(+). It carries out the reaction (5Z,8Z,11Z,14Z)-eicosatetraenoate + reduced [NADPH--hemoprotein reductase] + O2 = (14R,15S)-epoxy-(5Z,8Z,11Z)-eicosatrienoate + oxidized [NADPH--hemoprotein reductase] + H2O + H(+). The catalysed reaction is (5Z,8Z,11Z,14Z,17Z)-eicosapentaenoate + reduced [NADPH--hemoprotein reductase] + O2 = (17R,18S)-epoxy-(5Z,8Z,11Z,14Z)-eicosatetraenoate + oxidized [NADPH--hemoprotein reductase] + H2O + H(+). The enzyme catalyses (4Z,7Z,10Z,13Z,16Z,19Z)-docosahexaenoate + reduced [NADPH--hemoprotein reductase] + O2 = (19S,20R)-epoxy-(4Z,7Z,10Z,13Z,16Z)-docosapentaenoate + oxidized [NADPH--hemoprotein reductase] + H2O + H(+). It catalyses the reaction (4Z,7Z,10Z,13Z,16Z,19Z)-docosahexaenoate + reduced [NADPH--hemoprotein reductase] + O2 = (19R,20S)-epoxy-(4Z,7Z,10Z,13Z,16Z)-docosapentaenoate + oxidized [NADPH--hemoprotein reductase] + H2O + H(+). It carries out the reaction all-trans-retinol + reduced [NADPH--hemoprotein reductase] + O2 = all-trans-retinal + oxidized [NADPH--hemoprotein reductase] + 2 H2O + H(+). The catalysed reaction is all-trans-retinal + reduced [NADPH--hemoprotein reductase] + O2 = all-trans-retinoate + oxidized [NADPH--hemoprotein reductase] + H2O + 2 H(+). The enzyme catalyses (13S)-hydroperoxy-(9Z,11E)-octadecadienoate = 13-oxo-(9Z,11E)-octadecadienoate + H2O. It catalyses the reaction (12S)-hydroperoxy-(5Z,8Z,10E,14Z)-eicosatetraenoate = 12-oxo-(5Z,8Z,10E,14Z)-eicosatetraenoate + H2O. It carries out the reaction (15S)-hydroperoxy-(5Z,8Z,11Z,13E)-eicosatetraenoate = 15-oxo-(5Z,8Z,11Z,13E)-eicosatetraenoate + H2O. The catalysed reaction is (5S)-hydroperoxy-(6E,8Z,11Z,14Z)-eicosatetraenoate = 5-oxo-(6E,8Z,11Z,14Z)-eicosatetraenoate + H2O. It participates in steroid hormone biosynthesis. The protein operates within lipid metabolism; fatty acid metabolism. Its pathway is cofactor metabolism; retinol metabolism. In terms of biological role, a cytochrome P450 monooxygenase involved in the metabolism of various endogenous substrates, including fatty acids, steroid hormones and vitamins. Mechanistically, uses molecular oxygen inserting one oxygen atom into a substrate, and reducing the second into a water molecule, with two electrons provided by NADPH via cytochrome P450 reductase (CPR; NADPH-ferrihemoprotein reductase). Catalyzes the hydroxylation of carbon-hydrogen bonds. Exhibits high catalytic activity for the formation of hydroxyestrogens from estrone (E1) and 17beta-estradiol (E2), namely 2-hydroxy E1 and E2, as well as D-ring hydroxylated E1 and E2 at the C15alpha and C16alpha positions. Displays different regioselectivities for polyunsaturated fatty acids (PUFA) hydroxylation. Catalyzes the epoxidation of double bonds of certain PUFA. Converts arachidonic acid toward epoxyeicosatrienoic acid (EET) regioisomers, 8,9-, 11,12-, and 14,15-EET, that function as lipid mediators in the vascular system. Displays an absolute stereoselectivity in the epoxidation of eicosapentaenoic acid (EPA) producing the 17(R),18(S) enantiomer. May play an important role in all-trans retinoic acid biosynthesis in extrahepatic tissues. Catalyzes two successive oxidative transformation of all-trans retinol to all-trans retinal and then to the active form all-trans retinoic acid. May also participate in eicosanoids metabolism by converting hydroperoxide species into oxo metabolites (lipoxygenase-like reaction, NADPH-independent). The sequence is that of Cytochrome P450 1A1 (CYP1A1) from Balaenoptera acutorostrata (Common minke whale).